The primary structure comprises 299 residues: Putative fructokinase (299 aa).

T130 contributes to the ATP binding site. Residues H153, C168, H171, and C174 each coordinate Zn(2+). ATP is bound by residues P182 and 230 to 234 (GVMQQ).

This sequence belongs to the ROK (NagC/XylR) family. Requires Mg(2+) as cofactor.

The enzyme catalyses D-fructose + ATP = D-fructose 6-phosphate + ADP + H(+). Its activity is regulated as follows. Inhibited by zinc ions. Functionally, seems to be involved in the degradation of glucomannan. This chain is Putative fructokinase (gmuE), found in Bacillus subtilis (strain 168).